The primary structure comprises 257 residues: Zinc transporter ZupT (257 aa).

Transmembrane regions (helical) follow at residues 5–25, 32–52, and 61–81; these read LILTILAGAATFIGAFLGVLG, LLAFSLGFAAGIMLLISLMEM, and GMSPVLGYGMFIFGLLGYFGL. 2 residues coordinate Fe(2+): N120 and E123. The Zn(2+) site is built by E123 and H148. Transmembrane regions (helical) follow at residues 137 to 157, 171 to 191, 195 to 215, and 236 to 256; these read LGFGIALAVALHNIPEGLAVA, ILWAGISGLAEILGGVLAWLI, MISPVVMAAIMAAVAGIMVAL, and GVLCGMSVMGFSLVLLQTAGI. N149, E152, and E181 together coordinate Fe(2+). A Zn(2+)-binding site is contributed by E152.

Belongs to the ZIP transporter (TC 2.A.5) family. ZupT subfamily.

The protein localises to the cell inner membrane. It catalyses the reaction Zn(2+)(in) = Zn(2+)(out). Mediates zinc uptake. May also transport other divalent cations. The polypeptide is Zinc transporter ZupT (Escherichia coli O45:K1 (strain S88 / ExPEC)).